The following is a 90-amino-acid chain: MSRIVNCVKLKREAEGLDFPPYPGELGTRIWQQISKEAWEEWKQIQTRLVNENRLNLADARARKYLQQQMERFLFEDGTVEAQGYVPPSA.

Belongs to the Fe(2+)-trafficking protein family.

Could be a mediator in iron transactions between iron acquisition and iron-requiring processes, such as synthesis and/or repair of Fe-S clusters in biosynthetic enzymes. The polypeptide is Probable Fe(2+)-trafficking protein (Bordetella bronchiseptica (strain ATCC BAA-588 / NCTC 13252 / RB50) (Alcaligenes bronchisepticus)).